Here is a 278-residue protein sequence, read N- to C-terminus: HTH-type transcriptional regulator ExsA (278 aa).

An HTH araC/xylS-type domain is found at 171-269 (ERLQLFMEKH…GCTPSRSRQG (99 aa)). DNA-binding regions (H-T-H motif) lie at residues 188 to 209 (SDFS…GSVY) and 236 to 259 (IVDI…RRRF).

As to quaternary structure, homodimer. Interacts with ExsD; this interaction inhibits ExsA activity.

Its activity is regulated as follows. In the absence of inducing signals such as low Ca(2+) or host cell contact, the T3SS/injectisome is expressed at a low basal level and exists in a quiescent state due to ExsA sequestration by ExsD in a 1:1 complex. Upon host cell contact, this interaction is disrupted by the anti-antiactivator protein ExsC leading to ExsA activation. Transcriptional regulator that plays an essential role in the activation the type III secretion system (T3SS) operons. In addition, ExsA directly regulates the transcription of ImpA virulence factor that cooperatively inhibits the functions of host macrophages together with the T3SS. The chain is HTH-type transcriptional regulator ExsA (exsA) from Pseudomonas aeruginosa (strain ATCC 15692 / DSM 22644 / CIP 104116 / JCM 14847 / LMG 12228 / 1C / PRS 101 / PAO1).